A 313-amino-acid chain; its full sequence is Malate dehydrogenase (313 aa).

Residues 8–13 and aspartate 33 contribute to the NAD(+) site; that span reads GAGNVG. Arginine 83 and arginine 89 together coordinate substrate. NAD(+) contacts are provided by residues asparagine 96 and 119–121; that span reads ISN. Asparagine 121 and arginine 152 together coordinate substrate. Histidine 176 functions as the Proton acceptor in the catalytic mechanism.

The protein belongs to the LDH/MDH superfamily. MDH type 3 family.

It carries out the reaction (S)-malate + NAD(+) = oxaloacetate + NADH + H(+). In terms of biological role, catalyzes the reversible oxidation of malate to oxaloacetate. The chain is Malate dehydrogenase from Bacteroides thetaiotaomicron (strain ATCC 29148 / DSM 2079 / JCM 5827 / CCUG 10774 / NCTC 10582 / VPI-5482 / E50).